The primary structure comprises 219 residues: Albonoursin synthase (219 aa).

It belongs to the nitroreductase family. As to quaternary structure, homomer. FMN is required as a cofactor. In terms of processing, the N-terminus is blocked.

Its subcellular location is the cytoplasm. It carries out the reaction cyclo(L-phenylalanyl-L-leucyl) + 2 O2 = albonoursin + 2 H2O2. Its function is as follows. Involved in the biosynthesis of albonoursin (cyclo[(alpha,beta-dehydro-Phe)-(alpha,beta-dehydro-Leu)]), an antibacterial peptide. Catalyzes the formation of alpha,beta-dehydro-Phe (DPhe) and alpha,beta-dehydro-Leu (DLeu) residues during the biosynthesis of albonoursin. The catalytic reaction of cyclo(L-Phe-L-Leu) occurs in a two-step sequential alpha-beta-dehydrogenation leading first to cyclo(alpha,beta-dehydro-Phe-L-Leu) and finally to albonoursin. Can also use cyclo(L-Phe-L-His), cyclo(L-Trp-L-Trp), cyclo(L-Leu-L-Ala), cyclo(L-Phe-Gly), cyclo(L-Leu-Gly), cyclo(L-Ser-Gly) and cyclo(L-Glu-Gly) as substrate suggesting that the diketopiperazine ring is essential for the enzymatic reaction. The chain is Albonoursin synthase (albA) from Streptomyces noursei (Streptomyces albulus).